Consider the following 218-residue polypeptide: MANSSPVYDWFQERLEIQDIADDIGTKYVPPHVNIFYCLGGITLVCFLIQFATGFAMTFYYKPTVAEAYTSVQYLMTDVSFGWLIRSVHRWSASMMVLMLILHVFRVYLTGGFKRPRELTWVTGVTMAVITVSFGVTGYSLPWDQVGYWAVKIVSGVPAAIPVVGDFMVELLRGGESVGQATLTRFYSLHTFVMPWLLAVFMLMHFLMIRKQGISGPL.

The chain crosses the membrane as a helical span at residues 35-55 (IFYCLGGITLVCFLIQFATGF). Heme c is bound at residue Cys-38. Positions 89 and 103 each coordinate heme b. The next 3 membrane-spanning stretches (helical) occupy residues 93–113 (ASMM…TGGF), 119–139 (LTWV…VTGY), and 189–209 (LHTF…FLMI). Heme b is bound by residues His-190 and His-205.

This sequence belongs to the cytochrome b family. PetB subfamily. In terms of assembly, the 4 large subunits of the cytochrome b6-f complex are cytochrome b6, subunit IV (17 kDa polypeptide, PetD), cytochrome f and the Rieske protein, while the 4 small subunits are PetG, PetL, PetM and PetN. The complex functions as a dimer. The cofactor is heme b. Heme c serves as cofactor.

Its subcellular location is the cellular thylakoid membrane. Component of the cytochrome b6-f complex, which mediates electron transfer between photosystem II (PSII) and photosystem I (PSI), cyclic electron flow around PSI, and state transitions. The sequence is that of Cytochrome b6 from Synechococcus sp. (strain CC9902).